The sequence spans 1357 residues: DNA-directed RNA polymerase subunit beta (1357 aa).

This sequence belongs to the RNA polymerase beta chain family. In terms of assembly, the RNAP catalytic core consists of 2 alpha, 1 beta, 1 beta' and 1 omega subunit. When a sigma factor is associated with the core the holoenzyme is formed, which can initiate transcription.

It catalyses the reaction RNA(n) + a ribonucleoside 5'-triphosphate = RNA(n+1) + diphosphate. DNA-dependent RNA polymerase catalyzes the transcription of DNA into RNA using the four ribonucleoside triphosphates as substrates. In Pseudomonas fluorescens (strain Pf0-1), this protein is DNA-directed RNA polymerase subunit beta.